The primary structure comprises 710 residues: Fatty acid oxidation complex subunit alpha (710 aa).

Residues methionine 1–proline 190 are enoyl-CoA hydratase. The 3-hydroxyacyl-CoA dehydrogenase stretch occupies residues arginine 310–lysine 710.

The protein in the N-terminal section; belongs to the enoyl-CoA hydratase/isomerase family. In the central section; belongs to the 3-hydroxyacyl-CoA dehydrogenase family. As to quaternary structure, heterotetramer of two alpha chains (FadJ) and two beta chains (FadI).

The protein localises to the cytoplasm. It carries out the reaction a (3S)-3-hydroxyacyl-CoA = a (2E)-enoyl-CoA + H2O. The enzyme catalyses a 4-saturated-(3S)-3-hydroxyacyl-CoA = a (3E)-enoyl-CoA + H2O. It catalyses the reaction a (3S)-3-hydroxyacyl-CoA + NAD(+) = a 3-oxoacyl-CoA + NADH + H(+). The catalysed reaction is (3S)-3-hydroxybutanoyl-CoA = (3R)-3-hydroxybutanoyl-CoA. The protein operates within lipid metabolism; fatty acid beta-oxidation. In terms of biological role, catalyzes the formation of a hydroxyacyl-CoA by addition of water on enoyl-CoA. Also exhibits 3-hydroxyacyl-CoA epimerase and 3-hydroxyacyl-CoA dehydrogenase activities. This is Fatty acid oxidation complex subunit alpha from Shewanella frigidimarina (strain NCIMB 400).